We begin with the raw amino-acid sequence, 249 residues long: DNA repair protein RecO (249 aa).

It belongs to the RecO family.

Its function is as follows. Involved in DNA repair and RecF pathway recombination. This Leptospira biflexa serovar Patoc (strain Patoc 1 / Ames) protein is DNA repair protein RecO.